A 673-amino-acid chain; its full sequence is Armadillo repeat-containing protein 8 (673 aa).

At alanine 2 the chain carries N-acetylalanine. ARM repeat units lie at residues 51-92, 95-134, 138-176, 178-217, 224-265, 269-309, 313-352, 374-413, 416-455, 458-497, 501-540, 543-585, 588-627, and 634-673; these read NKQK…SLAM, ENNV…TIFT, TPEE…HCCK, PDHQ…VLAF, MTLV…YMCR, IRTD…YLIE, ELQR…HDLK, DIRK…SLSR, QQLR…NLLL, SPSK…NMAF, QKIK…NLLS, PHID…NIAD, TAKE…NLTW, and QERQ…QYLA. A Phosphoserine modification is found at serine 337. Residue serine 512 is modified to Phosphoserine.

In terms of assembly, identified in the CTLH complex that contains GID4, RANBP9 and/or RANBP10, MKLN1, MAEA, RMND5A (or alternatively its paralog RMND5B), GID8, ARMC8, WDR26 and YPEL5. Within this complex, MAEA, RMND5A (or alternatively its paralog RMND5B), GID8, WDR26, and RANBP9 and/or RANBP10 form the catalytic core, while GID4, MKLN1, ARMC8 and YPEL5 have ancillary roles.

The protein resides in the nucleus. The protein localises to the cytoplasm. In terms of biological role, component of the CTLH E3 ubiquitin-protein ligase complex that selectively accepts ubiquitin from UBE2H and mediates ubiquitination and subsequent proteasomal degradation of the transcription factor HBP1. The sequence is that of Armadillo repeat-containing protein 8 (Armc8) from Mus musculus (Mouse).